A 500-amino-acid chain; its full sequence is MTKKYVLALDQGTTSCRAILFDRDSNIVGVAQKEFTQHYPKPGWVEHDPEEIWSTQYGVIAELMARYNVNPEEIAAIGITNQRETTVVWDRNTGKPVYNAIVWQCRRTAGICDELKAKGLEEKVRYKTGLVIDAYFSGTKIKWILDNVEGAREKAERGELLFGTIDTWLVWKLTGGKVHVTDYSNASRTMIYNIRELKWDEELLAELGIPASMLPEVKPSSYVYGETDPNVFFGHAIPISGIAGDQQAALFGQTCFEPGMAKNTYGTGCFMLMNTGDKVYESKNGLLTTIAWGIDGKVEYALEGSIFIAGAVIQWLRDGLKLIESAADSEYFASKVPDTGGVYIVPAFAGLGAPYWDMRARGTIVGLTRGTNKYHLVRAALESMAYQTRDVLSAMEADSGIKLQALKVDGGAVANNLLMQFQADILGVPVERPVNIETTAMGAAYLAGLAVGFWADKQELVAKYKVSRRFEPTMDEQTREKLYKGWQRAVTRAREWEVEE.

Thr-13 lines the ADP pocket. Residues Thr-13, Thr-14, and Ser-15 each contribute to the ATP site. A sn-glycerol 3-phosphate-binding site is contributed by Thr-13. Arg-17 contributes to the ADP binding site. Sn-glycerol 3-phosphate-binding residues include Arg-83, Glu-84, Tyr-135, and Asp-245. Glycerol is bound by residues Arg-83, Glu-84, Tyr-135, Asp-245, and Gln-246. 2 residues coordinate ADP: Thr-267 and Gly-310. Residues Thr-267, Gly-310, Gln-314, and Gly-411 each contribute to the ATP site. Positions 411 and 415 each coordinate ADP.

The protein belongs to the FGGY kinase family. Homotetramer and homodimer (in equilibrium).

It carries out the reaction glycerol + ATP = sn-glycerol 3-phosphate + ADP + H(+). It participates in polyol metabolism; glycerol degradation via glycerol kinase pathway; sn-glycerol 3-phosphate from glycerol: step 1/1. Activated by phosphorylation and inhibited by fructose 1,6-bisphosphate (FBP). Functionally, key enzyme in the regulation of glycerol uptake and metabolism. Catalyzes the phosphorylation of glycerol to yield sn-glycerol 3-phosphate. This Carboxydothermus hydrogenoformans (strain ATCC BAA-161 / DSM 6008 / Z-2901) protein is Glycerol kinase.